The chain runs to 111 residues: Nucleoid-associated protein Cpar_0834 (111 aa).

The protein belongs to the YbaB/EbfC family. Homodimer.

The protein resides in the cytoplasm. The protein localises to the nucleoid. Its function is as follows. Binds to DNA and alters its conformation. May be involved in regulation of gene expression, nucleoid organization and DNA protection. This is Nucleoid-associated protein Cpar_0834 from Chlorobaculum parvum (strain DSM 263 / NCIMB 8327) (Chlorobium vibrioforme subsp. thiosulfatophilum).